The primary structure comprises 98 residues: Putative protein adenylyltransferase MJ0126 (98 aa).

Residues 31–45 (GSYARNEQTETSDID) carry the GSX(10)DXD motif motif. Mg(2+)-binding residues include D43, D45, and D75.

It belongs to the MntA antitoxin family. Probably forms a complex with cognate toxin MJ0125. The cofactor is Mg(2+).

The catalysed reaction is L-tyrosyl-[protein] + ATP = O-(5'-adenylyl)-L-tyrosyl-[protein] + diphosphate. It carries out the reaction O-(5'-adenylyl)-L-tyrosyl-[protein] + ATP = O-[5'-(adenylyl-(5'-&gt;3')-adenylyl)]-L-tyrosyl-[protein] + diphosphate. In terms of biological role, probable antitoxin component of a putative type VII toxin-antitoxin (TA) system. Neutralizes cognate toxic MJ0125 by di-AMPylation. This is Putative protein adenylyltransferase MJ0126 from Methanocaldococcus jannaschii (strain ATCC 43067 / DSM 2661 / JAL-1 / JCM 10045 / NBRC 100440) (Methanococcus jannaschii).